A 116-amino-acid polypeptide reads, in one-letter code: Large ribosomal subunit protein uL18 (116 aa).

It belongs to the universal ribosomal protein uL18 family. As to quaternary structure, part of the 50S ribosomal subunit; part of the 5S rRNA/L5/L18/L25 subcomplex. Contacts the 5S and 23S rRNAs.

In terms of biological role, this is one of the proteins that bind and probably mediate the attachment of the 5S RNA into the large ribosomal subunit, where it forms part of the central protuberance. The chain is Large ribosomal subunit protein uL18 from Saccharophagus degradans (strain 2-40 / ATCC 43961 / DSM 17024).